We begin with the raw amino-acid sequence, 95 residues long: Small ribosomal subunit protein uS19 (95 aa).

It belongs to the universal ribosomal protein uS19 family.

Its function is as follows. Protein S19 forms a complex with S13 that binds strongly to the 16S ribosomal RNA. The protein is Small ribosomal subunit protein uS19 of Thermotoga sp. (strain RQ2).